The chain runs to 74 residues: UPF0291 protein lmo0496 (74 aa).

This sequence belongs to the UPF0291 family.

The protein localises to the cytoplasm. This chain is UPF0291 protein lmo0496, found in Listeria monocytogenes serovar 1/2a (strain ATCC BAA-679 / EGD-e).